A 195-amino-acid polypeptide reads, in one-letter code: Myelin-associated neurite-outgrowth inhibitor (195 aa).

Topologically, residues M1–K18 are cytoplasmic. Residues G19–A43 traverse the membrane as a helical segment. Residues G44–G143 are Extracellular-facing. Residues V144 to L162 form a helical membrane-spanning segment. At T163 to W195 the chain is on the cytoplasmic side.

Belongs to the FAM168 family.

It localises to the cytoplasm. The protein localises to the perinuclear region. It is found in the cell membrane. The protein resides in the cell projection. Its subcellular location is the axon. Functionally, inhibitor of neuronal axonal outgrowth. In Xenopus tropicalis (Western clawed frog), this protein is Myelin-associated neurite-outgrowth inhibitor (fam168b).